The following is a 518-amino-acid chain: Beta-secretase 2 (518 aa).

The first 20 residues, 1 to 20, serve as a signal peptide directing secretion; the sequence is MGALARALLLPLLAQWLLRA. The propeptide occupies 21–62; that stretch reads APELAPAPFTLPLRVAAATNRVVAPTPGPGTPAERHADGLAL. Topologically, residues 21 to 473 are extracellular; it reads APELAPAPFT…SEPILWIVSY (453 aa). The region spanning 92–429 is the Peptidase A1 domain; the sequence is YYLEMLIGTP…DRAQKRVGFA (338 aa). The active site involves Asp110. Residue Asn170 is glycosylated (N-linked (GlcNAc...) asparagine). Intrachain disulfides connect Cys233–Cys433, Cys292–Cys457, and Cys344–Cys393. Asp303 is a catalytic residue. Asn366 is a glycosylation site (N-linked (GlcNAc...) asparagine). The chain crosses the membrane as a helical span at residues 474–494; it reads ALMSVCGAILLVLIVLLLLPF. Residues 495-518 lie on the Cytoplasmic side of the membrane; it reads RCQRRPRDPEVVNDESSLVRHRWK.

The protein belongs to the peptidase A1 family. As to quaternary structure, monomer. Interacts with RTN3 and RTN4. Post-translationally, undergoes autoproteolytic cleavage. Glycosylated. As to expression, brain. Present in neurons within the hippocampus, frontal cortex and temporal cortex (at protein level). Expressed at low levels in most peripheral tissues and at higher levels in colon, kidney, pancreas, placenta, prostate, stomach and trachea. Expressed at low levels in the brain. Found in spinal cord, medulla oblongata, substantia nigra and locus coruleus. Expressed in the ductal epithelium of both normal and malignant prostate.

It is found in the cell membrane. The protein resides in the golgi apparatus. It localises to the endoplasmic reticulum. The protein localises to the endosome. Its subcellular location is the melanosome. It carries out the reaction Broad endopeptidase specificity. Cleaves Glu-Val-Asn-Leu-|-Asp-Ala-Glu-Phe in the Swedish variant of Alzheimer's amyloid precursor protein.. In terms of biological role, responsible for the proteolytic processing of the amyloid precursor protein (APP). Cleaves APP, between residues 690 and 691, leading to the generation and extracellular release of beta-cleaved soluble APP, and a corresponding cell-associated C-terminal fragment which is later released by gamma-secretase. It has also been shown that it can cleave APP between residues 671 and 672. Involved in the proteolytic shedding of PMEL at early stages of melanosome biogenesis. Cleaves PMEL within the M-beta fragment to release the amyloidogenic PMEL luminal fragment containing M-alpha and a small portion of M-beta N-terminus. This is a prerequisite step for subsequent processing and assembly of PMEL fibrils into amyloid sheets. Responsible also for the proteolytic processing of CLTRN in pancreatic beta cells. The polypeptide is Beta-secretase 2 (BACE2) (Homo sapiens (Human)).